Reading from the N-terminus, the 278-residue chain is Release factor glutamine methyltransferase (278 aa).

S-adenosyl-L-methionine is bound by residues 117–121 (GTGSG), D140, and N184. Substrate is bound at residue 184–187 (NPPY).

It belongs to the protein N5-glutamine methyltransferase family. PrmC subfamily.

It carries out the reaction L-glutaminyl-[peptide chain release factor] + S-adenosyl-L-methionine = N(5)-methyl-L-glutaminyl-[peptide chain release factor] + S-adenosyl-L-homocysteine + H(+). Methylates the class 1 translation termination release factors RF1/PrfA and RF2/PrfB on the glutamine residue of the universally conserved GGQ motif. This chain is Release factor glutamine methyltransferase, found in Bacteroides thetaiotaomicron (strain ATCC 29148 / DSM 2079 / JCM 5827 / CCUG 10774 / NCTC 10582 / VPI-5482 / E50).